We begin with the raw amino-acid sequence, 778 residues long: Acyl-homoserine lactone acylase PvdQ (778 aa).

The signal sequence occupies residues 1–25; the sequence is MTISRQFTGLTLAGLFLGLSLSAQA. A propeptide spans 196–218 (spacer peptide); the sequence is IENNARAYQLADTRLQRFALDRG. Ser-219 functions as the Nucleophile in the catalytic mechanism.

Belongs to the peptidase S45 family. In terms of assembly, heterodimer of an alpha subunit and a beta subunit processed from the same precursor.

The protein resides in the periplasm. It carries out the reaction an N-acyl-L-homoserine lactone + H2O = L-homoserine lactone + a carboxylate. Catalyzes the deacylation of acyl-homoserine lactone (AHL or acyl-HSL), releasing homoserine lactone (HSL) and the corresponding fatty acid. Possesses a specificity for the degradation of long-chain acyl-HSLs (side chains of 11 to 14 carbons in length). This Pseudomonas fluorescens (strain Pf0-1) protein is Acyl-homoserine lactone acylase PvdQ (pvdQ).